Here is a 1470-residue protein sequence, read N- to C-terminus: Collagen alpha-1(XVII) chain (1470 aa).

3 disordered regions span residues 1–155, 167–193, and 422–452; these read MDVT…PSTR, KGSR…GTVE, and SAEN…GGAS. Residues 1 to 476 are Cytoplasmic-facing; that stretch reads MDVTKKSKRD…CGSCCSWWKW (476 aa). Residues 1–573 form a nonhelical region (NC16) region; that stretch reads MDVTKKSKRD…MTEQENGNLR (573 aa). Basic and acidic residues predominate over residues 9 to 19; sequence RDGTEVTERIV. The segment covering 60–74 has biased composition (low complexity); that stretch reads GSSGYINSSGSIRGN. 3 stretches are compositionally biased toward polar residues: residues 75-96, 111-120, and 170-184; these read ASTS…SPGS, EGSSSGNSSP, and RSAS…SNTL. Residues 146 to 231 are necessary for interaction with DST and for the recruitment of DST to hemidesmosome; it reads RLQSASPSTR…WSSTLPAGSS (86 aa). Residues 430–452 are compositionally biased toward gly residues; it reads RGGGGGRGKGGGAGGGGGGGGAS. A helical; Signal-anchor for type II membrane protein membrane pass occupies residues 477 to 497; sequence LLGLLLTWLLLLGLLFGLIAL. Residues 498-1470 are Extracellular-facing; that stretch reads AEEVRKLKAR…RRKRSIAIKP (973 aa). Position 551 is a phosphoserine; by CK2 (S551). Disordered regions lie at residues 568–873, 885–999, 1159–1181, 1194–1220, and 1249–1298; these read ENGN…FLSS, GVDL…SSSG, DYRN…NAWS, TAGL…GVSA, and FIVG…TNGG. The segment at 574-1456 is triple-helical region; the sequence is GSPGPKGDMG…KGEKGDKGDQ (883 aa). The span at 597-609 shows a compositional bias: pro residues; it reads PGIPGPLGHPGPE. Low complexity-rich tracts occupy residues 742–755 and 781–803; these read EPGA…AGAD and DPGK…PGRP. A compositionally biased stretch (pro residues) spans 827–848; it reads PGPPGPPGAMGPPGPPGTPGPA. Positions 850–873 are enriched in low complexity; the sequence is PAGLPGQQGPRGEPGLAGDSFLSS. Pro residues-rich tracts occupy residues 891–914, 940–949, 982–992, 1166–1175, 1201–1215, and 1253–1262; these read PPGP…PRGP, PPGPPGPPGP, PPGPPGPPGPP, PPGPPGPPGM, PGPP…PRGP, and PPGPPGPQGP. N1273 carries N-linked (GlcNAc...) asparagine glycosylation. The span at 1275–1290 shows a compositional bias: low complexity; the sequence is SSNSSARRGTSYSSST. A glycan (N-linked (GlcNAc...) asparagine) is linked at N1395. The segment at 1406-1470 is disordered; sequence TYGTIPGPPG…RRKRSIAIKP (65 aa). Residues 1434–1443 show a composition bias toward pro residues; sequence PRGPPGPPGP. Positions 1446 to 1455 are enriched in basic and acidic residues; it reads NKGEKGDKGD. The segment at 1457-1470 is nonhelical region (NC1); the sequence is VYTGRRKRSIAIKP. Over residues 1460–1470 the composition is skewed to basic residues; the sequence is GRRKRSIAIKP.

As to quaternary structure, homotrimers of alpha 1(XVII)chains. Interacts (via cytoplasmic region) with ITGB4 (via cytoplasmic region). Interacts (via cytoplasmic region) with DST (via N-terminus). Interacts (via N-terminus) with PLEC. Interacts (via cytoplasmic region) with DSP. The intracellular/endo domain is disulfide-linked. Post-translationally, prolines at the third position of the tripeptide repeating unit (G-X-Y) are hydroxylated in some or all of the chains. In terms of processing, the ectodomain is shedded from the surface of keratinocytes resulting in a 120-kDa soluble form, also named as 120 kDa linear IgA disease antigen homolog. The shedding is mediated by membrane-bound metalloproteases. This cleavage is inhibited by phosphorylation at Ser-551.

It is found in the cell junction. The protein resides in the hemidesmosome. Its subcellular location is the membrane. It localises to the secreted. The protein localises to the extracellular space. It is found in the extracellular matrix. The protein resides in the basement membrane. Functionally, may play a role in the integrity of hemidesmosome and the attachment of basal keratinocytes to the underlying basement membrane. The 120 kDa linear IgA disease antigen homolog is an anchoring filament component involved in dermal-epidermal cohesion. The protein is Collagen alpha-1(XVII) chain (Col17a1) of Mus musculus (Mouse).